A 98-amino-acid chain; its full sequence is Complement inhibitor RaCI1 (98 aa).

Residues 1 to 20 (MNAMLVLFIASALFISEHNT) form the signal peptide. Intrachain disulfides connect C33-C57, C38-C59, and C53-C74. Residues 79 to 98 (TTKPPMAPGDNKDNKEEESN) form a disordered region. A compositionally biased stretch (basic and acidic residues) spans 88 to 98 (DNKDNKEEESN).

The protein belongs to the RaCI family. In terms of tissue distribution, expressed in salivary glands.

Its subcellular location is the secreted. Complement inhibitor. Prevents complement-mediated C5 activation by binding to C5. Binds C5 at a different binding site than the other tick complement inhibitors OmCI and CirpT1, and the drug eculizumab. Inhibits the complement in human and guinea pig but not in other species tested (rabbit, rat, mouse, and pig). The sequence is that of Complement inhibitor RaCI1 from Rhipicephalus appendiculatus (Brown ear tick).